The sequence spans 463 residues: MLSVREFSNISMIKGPLIYVQGVTDASYNELVEIEMPNGEKRRGLVIDSQMGIAIVQVFEGTTGVSPTGTKIRMLGRGLEVKISEEMLGRIFNPLGDSLDNGPPVIKGEKRDINGSPLNPAAREYPEEFIQTGISAIDGLNALLRGQKLPIFSGSGLPANMLAAQIAKQATVRGEESNFAVVFAAIGARYDDALFFRKFFEETGAINRVAMIVSLANEPPVMKTLTPKTALTLAEYLAFEQDMHVLAILIDMTNYCEALREISAAREEVPGRGGYPGYMYTDLATIYERAGKVLGKKGSITQMPILTMPNDDITHPIPDLTGYITEGQIVLDRALYNKGIYPPINVLMSLSRLAKDGIGEGKTRDDHKDVSNQLFASYARAVDTRGLAAIIGEDSLSEVDRKYLLFGELFERKFVSQGFNENRDIETTLDIGWEILSVLPESELTNIKTQYIKKYHPNYRGKK.

Belongs to the ATPase alpha/beta chains family. Has multiple subunits with at least A(3), B(3), C, D, E, F, H, I and proteolipid K(x).

Its subcellular location is the cell membrane. Functionally, component of the A-type ATP synthase that produces ATP from ADP in the presence of a proton gradient across the membrane. The B chain is a regulatory subunit. This chain is A-type ATP synthase subunit B, found in Saccharolobus islandicus (strain Y.N.15.51 / Yellowstone #2) (Sulfolobus islandicus).